Consider the following 190-residue polypeptide: Nucleoside triphosphate pyrophosphatase (190 aa).

The active-site Proton acceptor is aspartate 69.

This sequence belongs to the Maf family. The cofactor is a divalent metal cation.

It is found in the cytoplasm. The catalysed reaction is a ribonucleoside 5'-triphosphate + H2O = a ribonucleoside 5'-phosphate + diphosphate + H(+). It catalyses the reaction a 2'-deoxyribonucleoside 5'-triphosphate + H2O = a 2'-deoxyribonucleoside 5'-phosphate + diphosphate + H(+). Its function is as follows. Nucleoside triphosphate pyrophosphatase. May have a dual role in cell division arrest and in preventing the incorporation of modified nucleotides into cellular nucleic acids. In Helicobacter pylori (strain G27), this protein is Nucleoside triphosphate pyrophosphatase.